Consider the following 283-residue polypeptide: Formamidopyrimidine-DNA glycosylase (283 aa).

The active-site Schiff-base intermediate with DNA is proline 2. Glutamate 3 acts as the Proton donor in catalysis. Lysine 58 acts as the Proton donor; for beta-elimination activity in catalysis. DNA contacts are provided by histidine 100, arginine 119, and lysine 162. Residues 247-283 (RVYGREGQRCQTPDCAEKILRKVQSGRSSFYCPACQR) form an FPG-type zinc finger. Residue arginine 273 is the Proton donor; for delta-elimination activity of the active site.

It belongs to the FPG family. Monomer. Zn(2+) is required as a cofactor.

The catalysed reaction is Hydrolysis of DNA containing ring-opened 7-methylguanine residues, releasing 2,6-diamino-4-hydroxy-5-(N-methyl)formamidopyrimidine.. The enzyme catalyses 2'-deoxyribonucleotide-(2'-deoxyribose 5'-phosphate)-2'-deoxyribonucleotide-DNA = a 3'-end 2'-deoxyribonucleotide-(2,3-dehydro-2,3-deoxyribose 5'-phosphate)-DNA + a 5'-end 5'-phospho-2'-deoxyribonucleoside-DNA + H(+). Functionally, involved in base excision repair of DNA damaged by oxidation or by mutagenic agents. Acts as a DNA glycosylase that recognizes and removes damaged bases. Has a preference for oxidized purines, such as 7,8-dihydro-8-oxoguanine (8-oxoG). Has AP (apurinic/apyrimidinic) lyase activity and introduces nicks in the DNA strand. Cleaves the DNA backbone by beta-delta elimination to generate a single-strand break at the site of the removed base with both 3'- and 5'-phosphates. The polypeptide is Formamidopyrimidine-DNA glycosylase (Jannaschia sp. (strain CCS1)).